We begin with the raw amino-acid sequence, 240 residues long: Coatomer subunit delta (240 aa).

The segment covering 215 to 226 (AAAKASSAPKAK) has biased composition (low complexity). A disordered region spans residues 215–240 (AAAKASSAPKAKGMQLGKKKNTSLLY). A compositionally biased stretch (basic residues) spans 231 to 240 (GKKKNTSLLY).

It belongs to the adaptor complexes medium subunit family. Delta-COP subfamily. Oligomeric complex that consists of at least the alpha, beta, beta', gamma, delta, epsilon and zeta subunits.

The protein localises to the cytoplasm. The protein resides in the nucleus. In terms of biological role, the coatomer is a cytosolic protein complex that binds to dilysine motifs and reversibly associates with Golgi non-clathrin-coated vesicles, which further mediate biosynthetic protein transport from the ER, via the Golgi up to the trans Golgi network. Coatomer complex is required for budding from Golgi membranes, and is essential for the retrograde Golgi-to-ER transport of dilysine-tagged proteins. The protein is Coatomer subunit delta (ret2) of Schizosaccharomyces pombe (strain 972 / ATCC 24843) (Fission yeast).